The primary structure comprises 531 residues: DnaJ homolog subfamily C member 21 (531 aa).

Residues 3-69 (CHYEALGVRR…QERAWYDNHR (67 aa)) enclose the J domain. Disordered stretches follow at residues 279–311 (FGDGSDENEMEEHELKDEEDGKDSDEAEDAELY), 327–474 (KAMK…VPAE), and 502–531 (KATGHARAPSSSSLNSATSSQSKKEKRKNR). Residues 281-311 (DGSDENEMEEHELKDEEDGKDSDEAEDAELY) show a composition bias toward acidic residues. Residues Ser283 and Ser302 each carry the phosphoserine modification. Residues 314-338 (LYCPACDKSFKTEKAMKNHEKSKKH) form a C2H2-type 1 zinc finger. The segment covering 364-375 (NPLDDNSEEEME) has biased composition (acidic residues). Position 370 is a phosphoserine (Ser370). Positions 381-392 (KLSKKQKKKKQK) are enriched in basic residues. A compositionally biased stretch (polar residues) spans 393–403 (PAQNYDDNFNV). Basic and acidic residues predominate over residues 442–453 (KPCDDPKSEAKS). The span at 455-464 (PKPKGKKTKD) shows a compositional bias: basic residues. The segment at 482 to 506 (ISCTTCHSEFPSRNKLFDHLKATGH) adopts a C2H2-type 2 zinc-finger fold. Ser511 bears the Phosphoserine mark. The span at 511-522 (SSSSLNSATSSQ) shows a compositional bias: low complexity.

Interacts with HSPA8, PA2G4 and ZNF622. As to expression, expressed in brain, placenta, kidney and pancreas.

Its subcellular location is the cytoplasm. It is found in the nucleus. It localises to the nucleolus. Its function is as follows. May act as a co-chaperone for HSP70. May play a role in ribosomal RNA (rRNA) biogenesis, possibly in the maturation of the 60S subunit. Binds the precursor 45S rRNA. The polypeptide is DnaJ homolog subfamily C member 21 (DNAJC21) (Homo sapiens (Human)).